Here is a 424-residue protein sequence, read N- to C-terminus: Hemagglutinin-esterase (424 aa).

A signal peptide spans 1–16 (MFLLPRFVLVSCIIGS). The segment at 7 to 127 (FVLVSCIIGS…SNDIWMQNKG (121 aa)) is esterase domain 1. Over 17-392 (LGFDNPPTNV…PICVYDPLPI (376 aa)) the chain is Virion surface. Ser-40 functions as the Nucleophile in the catalytic mechanism. Cys-44 and Cys-65 are disulfide-bonded. Residues Asn-54, Asn-89, Asn-153, Asn-236, and Asn-301 are each glycosylated (N-linked (GlcNAc...) asparagine; by host). Intrachain disulfides connect Cys-113-Cys-162, Cys-197-Cys-276, and Cys-205-Cys-249. The tract at residues 128–266 (LFYTQVYKNM…GNYLAISNEL (139 aa)) is receptor binding. Positions 267–379 (LLTVPTKAIC…RCPTAADINT (113 aa)) are esterase domain 2. A disulfide bond links Cys-307 and Cys-312. A glycan (N-linked (GlcNAc...) asparagine; by host) is linked at Asn-316. Residues Asp-326 and His-329 each act as charge relay system in the active site. Cys-347 and Cys-371 are oxidised to a cystine. Asn-358 carries N-linked (GlcNAc...) asparagine; by host glycosylation. Residues 393 to 413 (ILLGILLGVAVIIIVVLLLYF) traverse the membrane as a helical segment. Residues 414–424 (MVDNGTRLHDA) are Intravirion-facing. Asn-417 is a glycosylation site (N-linked (GlcNAc...) asparagine; by host).

Belongs to the influenza type C/coronaviruses hemagglutinin-esterase family. In terms of assembly, homodimer; disulfide-linked. Forms a complex with the M protein in the pre-Golgi. Associates then with S-M complex to form a ternary complex S-M-HE. N-glycosylated in the host RER.

Its subcellular location is the virion membrane. It is found in the host cell membrane. It catalyses the reaction N-acetyl-9-O-acetylneuraminate + H2O = N-acetylneuraminate + acetate + H(+). It carries out the reaction N-acetyl-4-O-acetylneuraminate + H2O = N-acetylneuraminate + acetate + H(+). In terms of biological role, structural protein that makes short spikes at the surface of the virus. Contains receptor binding and receptor-destroying activities. Mediates de-O-acetylation of N-acetyl-4-O-acetylneuraminic acid, which is probably the receptor determinant recognized by the virus on the surface of erythrocytes and susceptible cells. This receptor-destroying activity is important for virus release as it probably helps preventing self-aggregation and ensures the efficient spread of the progeny virus from cell to cell. May serve as a secondary viral attachment protein for initiating infection, the spike protein being the major one. May become a target for both the humoral and the cellular branches of the immune system. This is Hemagglutinin-esterase from Bovine coronavirus (strain 98TXSF-110-LUN) (BCoV-LUN).